The sequence spans 165 residues: uncharacterized protein (165 aa).

A helical membrane pass occupies residues methionine 15–phenylalanine 35. Positions isoleucine 67–arginine 119 form a coiled coil. A disordered region spans residues valine 123–leucine 156. The segment covering proline 133–alanine 154 has biased composition (pro residues).

Its subcellular location is the membrane. This is an uncharacterized protein from Acheta domesticus (House cricket).